The following is a 125-amino-acid chain: Small ribosomal subunit protein uS12 (125 aa).

Position 89 is a 3-methylthioaspartic acid (Asp89). A disordered region spans residues 104-125 (TAGVKDRSQSRSKYGAKASKQD).

This sequence belongs to the universal ribosomal protein uS12 family. Part of the 30S ribosomal subunit. Contacts proteins S8 and S17. May interact with IF1 in the 30S initiation complex.

In terms of biological role, with S4 and S5 plays an important role in translational accuracy. Interacts with and stabilizes bases of the 16S rRNA that are involved in tRNA selection in the A site and with the mRNA backbone. Located at the interface of the 30S and 50S subunits, it traverses the body of the 30S subunit contacting proteins on the other side and probably holding the rRNA structure together. The combined cluster of proteins S8, S12 and S17 appears to hold together the shoulder and platform of the 30S subunit. The chain is Small ribosomal subunit protein uS12 from Prochlorococcus marinus (strain MIT 9303).